The chain runs to 562 residues: NAD-dependent malic enzyme (562 aa).

The Proton donor role is filled by Y101. An NAD(+)-binding site is contributed by R154. The active-site Proton acceptor is the K172. Residues E243, D244, and D267 each coordinate a divalent metal cation. 2 residues coordinate NAD(+): D267 and N415.

It belongs to the malic enzymes family. As to quaternary structure, homotetramer. It depends on Mg(2+) as a cofactor. Requires Mn(2+) as cofactor.

The enzyme catalyses (S)-malate + NAD(+) = pyruvate + CO2 + NADH. It carries out the reaction oxaloacetate + H(+) = pyruvate + CO2. The chain is NAD-dependent malic enzyme from Shewanella loihica (strain ATCC BAA-1088 / PV-4).